Reading from the N-terminus, the 365-residue chain is MLTASLYKQLPVLTTTATSTYSFIRLSSTLATPPHSTTTTSPSSPAFHQPNHPQQFANPNTSVFDVSTRIYTQEGIDNNNDTKFLTKAPYPHPVFPQDECENVTVTHRETKTLGDKISFRSIQFMRQCFDLVTGYAVPKTNNPDEFKGTRWEMTEGKWLTRCIFLESVAGVPGSVAGFLRHLHSLRMLRRDKAWIETLLDEAYNERMHLLTFIKIGKPSWFTRSIIYVGQGVFTNVFFLLYLLNPRYCHRFVGYLEEEAVRTYSHLLDELAVPGKLPAFETMKIPEVAVQYWPELTPKSSFKDLILRIRADEAKHREVNHTFANLEQKTDRNPFALKIEGLNKPQPNHGINVMRPTGWEKQDLQL.

The segment covering 32–46 has biased composition (low complexity); it reads TPPHSTTTTSPSSPA. The segment at 32–52 is disordered; the sequence is TPPHSTTTTSPSSPAFHQPNH. Fe cation-binding residues include Glu166, Glu205, and His208. A helical transmembrane segment spans residues 220 to 242; that stretch reads WFTRSIIYVGQGVFTNVFFLLYL. Residues Glu256, Glu257, Glu312, and His315 each contribute to the Fe cation site. Residues 345–365 form a disordered region; that stretch reads QPNHGINVMRPTGWEKQDLQL.

This sequence belongs to the alternative oxidase family. Fe cation is required as a cofactor.

The protein resides in the mitochondrion inner membrane. Catalyzes cyanide-resistant oxygen consumption. May increase respiration when the cytochrome respiratory pathway is restricted, or in response to low temperatures. The polypeptide is Alternative oxidase 2, mitochondrial (AOX2) (Candida albicans (Yeast)).